Reading from the N-terminus, the 111-residue chain is Large ribosomal subunit protein uL22 (111 aa).

This sequence belongs to the universal ribosomal protein uL22 family. Part of the 50S ribosomal subunit.

Its function is as follows. This protein binds specifically to 23S rRNA; its binding is stimulated by other ribosomal proteins, e.g. L4, L17, and L20. It is important during the early stages of 50S assembly. It makes multiple contacts with different domains of the 23S rRNA in the assembled 50S subunit and ribosome. The globular domain of the protein is located near the polypeptide exit tunnel on the outside of the subunit, while an extended beta-hairpin is found that lines the wall of the exit tunnel in the center of the 70S ribosome. The sequence is that of Large ribosomal subunit protein uL22 from Francisella tularensis subsp. tularensis (strain FSC 198).